We begin with the raw amino-acid sequence, 167 residues long: Glutathione peroxidase 1 (167 aa).

The active site involves Cys-41.

This sequence belongs to the glutathione peroxidase family.

The catalysed reaction is 2 glutathione + H2O2 = glutathione disulfide + 2 H2O. Functionally, may constitute a glutathione peroxidase-like protective system against oxidative stresses. The protein is Glutathione peroxidase 1 (GPXHA-1) of Helianthus annuus (Common sunflower).